The chain runs to 2089 residues: Non-reducing polyketide synthase PKS16 (2089 aa).

An N-terminal acylcarrier protein transacylase (SAT) domain (SAT) region spans residues 8 to 243; that stretch reads VLFGDQTVDP…IKLPITAAFH (236 aa). Positions 342-364 are disordered; sequence AGIEVSRSTEMQPRQEQRTKPRS. Residues 354-364 are compositionally biased toward basic and acidic residues; that stretch reads PRQEQRTKPRS. In terms of domain architecture, Ketosynthase family 3 (KS3) spans 364-793; it reads SSDIAIIGYA…GGNTSLLIED (430 aa). Catalysis depends on for beta-ketoacyl synthase activity residues cysteine 536, histidine 671, and histidine 710. The tract at residues 891 to 1214 is malonyl-CoA:ACP transacylase (MAT) domain; it reads VFLFTGQGSQ…SIANAYNSGV (324 aa). The segment at 1273–1586 is product template (PT) domain; that stretch reads TTCLQVIENE…KRTTLQSLLG (314 aa). The interval 1276-1408 is N-terminal hotdog fold; it reads LQVIENETFT…CTVMYGDGHQ (133 aa). One can recognise a PKS/mFAS DH domain in the interval 1276-1582; that stretch reads LQVIENETFT…FQQMKRTTLQ (307 aa). The active-site Proton acceptor; for dehydratase activity is histidine 1309. The tract at residues 1435-1582 is C-terminal hotdog fold; sequence IHRMLKEMIY…FQQMKRTTLQ (148 aa). Aspartate 1495 (proton donor; for dehydratase activity) is an active-site residue. Residues 1617 to 1694 enclose the Carrier 1 domain; that stretch reads QSPVAGFSKV…ELRAFFLDKM (78 aa). An O-(pantetheine 4'-phosphoryl)serine modification is found at serine 1654. Positions 1697 to 1730 are disordered; the sequence is PQATANDDDSDDSSDDEGPGFSRSQSNSTISTPE. The segment covering 1702-1714 has biased composition (acidic residues); that stretch reads NDDDSDDSSDDEG. A compositionally biased stretch (polar residues) spans 1718 to 1728; the sequence is SRSQSNSTIST. One can recognise a Carrier 2 domain in the interval 1729 to 1806; sequence PEEPDVVNVL…DVQKALGAAP (78 aa). Position 1766 is an O-(pantetheine 4'-phosphoryl)serine (serine 1766). The segment at 1848-2083 is thioesterase (TE) domain; that stretch reads LFLLPDGAGS…VVGGNHFSIM (236 aa).

It functions in the pathway secondary metabolite biosynthesis. Functionally, non-reducing polyketide synthase; part of the gene cluster that mediates the biosynthesis of orcinol depsidone grayanic acid (GRA), the only major secondary metabolite known in C.grayi. The first step consists in the ring and depside synthesis by PKS16 leading to 4-O-demethylsphaerophorin, involving different orcinol-like rings, one with acetyl CoA and the other with octanoyl CoA as the starter. Further depsidone formation by the GRA cluster-specific cytochrome P450 leads to 4-O-demethylgrayanic acid. Finally, the cluster specific O-methyltransferase probably converts the 4-O-demethylgrayanic acid into grayanic acid. This Cladonia grayi (Gray's cup lichen) protein is Non-reducing polyketide synthase PKS16.